We begin with the raw amino-acid sequence, 561 residues long: Putative pectinesterase/pectinesterase inhibitor 24 (561 aa).

Residues 26 to 46 (IAIIAVSLVILAGIVIGAVFG) form a helical membrane-spanning segment. A pectinesterase inhibitor 24 region spans residues 64–211 (DSISVSVKAV…TELTSNALAI (148 aa)). 4 N-linked (GlcNAc...) asparagine glycosylation sites follow: Asn-92, Asn-130, Asn-148, and Asn-200. The tract at residues 255-548 (DIVVAKDGSG…TVKPFIDGGR (294 aa)) is pectinesterase 24. The substrate site is built by Thr-330 and Gln-360. The active-site Proton donor; for pectinesterase activity is Asp-383. Cys-397 and Cys-417 form a disulfide bridge. Asp-404 serves as the catalytic Nucleophile; for pectinesterase activity. 2 residues coordinate substrate: Arg-468 and Trp-470. N-linked (GlcNAc...) asparagine glycosylation is present at Asn-472.

In the N-terminal section; belongs to the PMEI family. This sequence in the C-terminal section; belongs to the pectinesterase family.

It is found in the membrane. It catalyses the reaction [(1-&gt;4)-alpha-D-galacturonosyl methyl ester](n) + n H2O = [(1-&gt;4)-alpha-D-galacturonosyl](n) + n methanol + n H(+). The protein operates within glycan metabolism; pectin degradation; 2-dehydro-3-deoxy-D-gluconate from pectin: step 1/5. Its function is as follows. Acts in the modification of cell walls via demethylesterification of cell wall pectin. In Arabidopsis thaliana (Mouse-ear cress), this protein is Putative pectinesterase/pectinesterase inhibitor 24 (PME24).